The primary structure comprises 105 residues: UPF0060 membrane protein Reut_B3679 (105 aa).

4 helical membrane-spanning segments follow: residues 4–24 (IALYLLTAVAEILGCYLPYLW), 28–48 (GASAWVLLPGALSLALFAWLL), 60–80 (AAYGGVYIGVAVLWLWLVDGV), and 82–102 (PSAWDLAGVGVAFGGMAIIVF).

This sequence belongs to the UPF0060 family.

The protein localises to the cell inner membrane. The chain is UPF0060 membrane protein Reut_B3679 from Cupriavidus pinatubonensis (strain JMP 134 / LMG 1197) (Cupriavidus necator (strain JMP 134)).